A 324-amino-acid polypeptide reads, in one-letter code: Transcriptional regulator protein Pur-beta (324 aa).

Residues 1–47 (MADGDSGSERGGGGGGGGGPGGFQPAPRGGGGGGGGPGGEQETQELA) form a disordered region. Ala-2 carries the N-acetylalanine modification. Residues Ser-6 and Ser-8 each carry the phosphoserine modification. Over residues 9-39 (ERGGGGGGGGGPGGFQPAPRGGGGGGGGPGG) the composition is skewed to gly residues. Residue Arg-28 is modified to Omega-N-methylarginine. The DNA-binding stretch occupies residues 37–263 (PGGEQETQEL…GVFLRVSEVK (227 aa)). The residue at position 43 (Thr-43) is a Phosphothreonine. Ser-113 is subject to Phosphoserine. Arg-164 bears the Omega-N-methylarginine mark. Lys-279 bears the N6-acetyllysine mark. Over residues 297–307 (RQRDKLYERRG) the composition is skewed to basic and acidic residues. The disordered stretch occupies residues 297–324 (RQRDKLYERRGGGSGGGDESEGEEVDED). Arg-306 carries the omega-N-methylarginine modification. A phosphoserine mark is found at Ser-310 and Ser-316. Acidic residues predominate over residues 314–324 (DESEGEEVDED).

Belongs to the PUR DNA-binding protein family. As to quaternary structure, homodimer, heterodimer with PURA and heterotrimer with PURA and YBX1/Y-box protein 1. Interacts with MYOCD and SRF.

The protein localises to the nucleus. In terms of biological role, transcriptional regulator which can act as an activator or a repressor. Represses the transcription of ACTA2 in fibroblasts and smooth muscle cells via its ability to interact with the purine-rich strand of a MCAT-containing element in the 5' flanking region of the gene. Represses the transcription of MYOCD, capable of repressing all isoforms of MYOCD but the magnitude of the repressive effects is most notable for the SMC-specific isoforms. Promotes hepatic glucose production by activating the transcription of ADCY6, leading to cAMP accumulation, increased PKA activity, CREB activation, and increased transcription of PCK1 and G6PC genes. Has capacity to bind repeated elements in single-stranded DNA such as the purine-rich single strand of the PUR element located upstream of the MYC gene. Participates in transcriptional and translational regulation of alpha-MHC expression in cardiac myocytes by binding to the purine-rich negative regulatory (PNR) element. Modulates constitutive liver galectin-3 gene transcription by binding to its promoter. May play a role in the dendritic transport of a subset of mRNAs. The polypeptide is Transcriptional regulator protein Pur-beta (Purb) (Mus musculus (Mouse)).